The chain runs to 198 residues: MIMRRIQVTETTENKDLVQGDVQAETATEEVERSEVQEEIELSVEEQYEANVAELQAKLDDDEENRHLRLRADFDNMRRRQQLDGEAAEKYRAQSLLSDLLPVLDNFERALQVETTSEETASIIKGIEMVYRSLLEATVFEGLQVIKAEGEQFDPNIHQAVMQEQDSEKETGVVLRELQKGYILKDRVLRPTMVSVNE.

Belongs to the GrpE family. In terms of assembly, homodimer.

It localises to the cytoplasm. In terms of biological role, participates actively in the response to hyperosmotic and heat shock by preventing the aggregation of stress-denatured proteins, in association with DnaK and GrpE. It is the nucleotide exchange factor for DnaK and may function as a thermosensor. Unfolded proteins bind initially to DnaJ; upon interaction with the DnaJ-bound protein, DnaK hydrolyzes its bound ATP, resulting in the formation of a stable complex. GrpE releases ADP from DnaK; ATP binding to DnaK triggers the release of the substrate protein, thus completing the reaction cycle. Several rounds of ATP-dependent interactions between DnaJ, DnaK and GrpE are required for fully efficient folding. This chain is Protein GrpE, found in Lysinibacillus sphaericus (Bacillus sphaericus).